A 1616-amino-acid chain; its full sequence is Protein P200 (1616 aa).

Disordered stretches follow at residues 1 to 41, 878 to 909, 931 to 975, 1004 to 1083, 1100 to 1132, and 1159 to 1433; these read MPKT…DKVE, HFQPDVQPEQTPQEAKFDSPVEIPQESSQAEF, QQLE…LDQN, DNVE…EPVD, FDKNQTQTEGLEEPQVSSEAEVVDQTTTDTVGE, and ISEP…SEEE. The interval 891–1389 is 2 X 26 AA repeats; that stretch reads EAKFDSPVEI…QEAKFDSPVE (499 aa). Positions 938-952 are enriched in low complexity; the sequence is EETVVTPTEVTAFEP. Composition is skewed to basic and acidic residues over residues 1012–1029 and 1059–1081; these read QPKETEAEITFDETKELQ and VFEKPQLETQTEKILEEEPKSEP. 2 tandem repeats follow at residues 1161-1186 and 1205-1236. Polar residues-rich tracts occupy residues 1200–1227 and 1242–1251; these read VQTQPEIQPVESQPEATFDTVQPEQTPQ and EFSSEPTQQH. Residues 1205 to 1389 form a 2 X 32 AA repeats region; the sequence is EIQPVESQPE…QEAKFDSPVE (185 aa). Residues 1256–1270 are compositionally biased toward acidic residues; the sequence is ASFDEPNYDFDEPNY. Residues 1276 to 1285 are compositionally biased toward polar residues; that stretch reads SYDSDLQPSE. A compositionally biased stretch (acidic residues) spans 1288–1302; it reads YDVDEPNYDFDEPNY. The segment covering 1309-1323 has biased composition (low complexity); the sequence is SEPQFEPQVEQQPGE. Repeat copies occupy residues 1310–1339 and 1358–1389. Positions 1353–1380 are enriched in polar residues; it reads VQTQPEIQPVESQPEATFDTVQPEQTPQ. The segment covering 1392–1406 has biased composition (low complexity); that stretch reads QEPQVSSEPEVVVQP. A compositionally biased stretch (acidic residues) spans 1416 to 1433; sequence VLEEPQADEIQPEASEEE.

Its function is as follows. Could be an accessory structural component in cytadherence. The chain is Protein P200 from Mycoplasma genitalium (strain ATCC 33530 / DSM 19775 / NCTC 10195 / G37) (Mycoplasmoides genitalium).